Consider the following 133-residue polypeptide: UPF0047 protein Rv2556c (133 aa).

This sequence belongs to the UPF0047 family.

This is UPF0047 protein Rv2556c from Mycobacterium tuberculosis (strain ATCC 25618 / H37Rv).